The chain runs to 606 residues: Probable glutamine--fructose-6-phosphate aminotransferase [isomerizing] (606 aa).

The active-site For GATase activity is C2. One can recognise a Glutamine amidotransferase type-2 domain in the interval 2–224; the sequence is CGISACLNHT…DNDYGYITNN (223 aa). SIS domains follow at residues 282–427 and 458–596; these read FFPE…SLDN and LLEF…PDYP.

The enzyme catalyses D-fructose 6-phosphate + L-glutamine = D-glucosamine 6-phosphate + L-glutamate. The protein operates within nucleotide-sugar biosynthesis; UDP-N-acetyl-alpha-D-glucosamine biosynthesis; alpha-D-glucosamine 6-phosphate from D-fructose 6-phosphate: step 1/1. Its function is as follows. Controls the flux of glucose into the hexosamine pathway. Most likely involved in regulating the availability of precursors for glycosylation of proteins (Potential). This is Probable glutamine--fructose-6-phosphate aminotransferase [isomerizing] from Acanthamoeba polyphaga (Amoeba).